The chain runs to 305 residues: 2-methoxy-6-polyprenyl-1,4-benzoquinol methylase, mitochondrial (305 aa).

The N-terminal 34 residues, 1-34, are a transit peptide targeting the mitochondrion; it reads MSRLRAPVAKFLADGLKGIRSTALAGSRLSNCRY. Residues T117, D143, and 173 to 174 contribute to the S-adenosyl-L-methionine site; that span reads NA.

It belongs to the class I-like SAM-binding methyltransferase superfamily. MenG/UbiE family. As to quaternary structure, component of a multi-subunit COQ enzyme complex, composed of at least COQ3, COQ4, COQ5, COQ6, COQ7 and COQ9.

Its subcellular location is the mitochondrion inner membrane. It carries out the reaction 2-methoxy-6-(all-trans-decaprenyl)benzene-1,4-diol + S-adenosyl-L-methionine = 5-methoxy-2-methyl-3-(all-trans-decaprenyl)benzene-1,4-diol + S-adenosyl-L-homocysteine + H(+). Its pathway is cofactor biosynthesis; ubiquinone biosynthesis. Methyltransferase required for the conversion of 2-decaprenyl-6-methoxy-1,4-benzoquinol (DDMQH2) to 2-decaprenyl-3-methyl-6-methoxy-1,4-benzoquinol (DMQH2). This chain is 2-methoxy-6-polyprenyl-1,4-benzoquinol methylase, mitochondrial, found in Schizosaccharomyces pombe (strain 972 / ATCC 24843) (Fission yeast).